The following is a 185-amino-acid chain: Ribosome-recycling factor (185 aa).

This sequence belongs to the RRF family.

The protein localises to the cytoplasm. Its function is as follows. Responsible for the release of ribosomes from messenger RNA at the termination of protein biosynthesis. May increase the efficiency of translation by recycling ribosomes from one round of translation to another. The protein is Ribosome-recycling factor of Geobacter sp. (strain M21).